The sequence spans 318 residues: NADH-ubiquinone oxidoreductase chain 1 (318 aa).

A run of 8 helical transmembrane segments spans residues 2–22 (FFINILTLLVPILIAMAFLTL), 70–90 (LFIIAPTLSLTLALSLWVPLP), 100–120 (LGILFILATSSLSVYSILWSG), 136–156 (VAQTISYEVTMAIILLSVLLM), 171–191 (HMWLLLPAWPMAMMWFISTLA), 231–251 (IILMNALTTIIFLGPLYYINL), 253–273 (ELYSTNFMMEALLLSSTFLWI), and 293–313 (FLPLTLALCMWHISLPIFTAG).

The protein belongs to the complex I subunit 1 family. Core subunit of respiratory chain NADH dehydrogenase (Complex I) which is composed of 45 different subunits.

It is found in the mitochondrion inner membrane. The catalysed reaction is a ubiquinone + NADH + 5 H(+)(in) = a ubiquinol + NAD(+) + 4 H(+)(out). Core subunit of the mitochondrial membrane respiratory chain NADH dehydrogenase (Complex I) which catalyzes electron transfer from NADH through the respiratory chain, using ubiquinone as an electron acceptor. Essential for the catalytic activity and assembly of complex I. This Mus musculus (Mouse) protein is NADH-ubiquinone oxidoreductase chain 1 (Mtnd1).